Reading from the N-terminus, the 411-residue chain is Lissencephaly-1 homolog (411 aa).

The LisH domain occupies 9–41; it reads QREELNQAIADYLGSNGYADSLEAFRKEADLST. Positions 56–83 form a coiled coil; it reads TSVIRLQKKVMELEAKLTEAEKEVIEGA. 7 WD repeats span residues 106–147, 148–187, 191–230, 233–272, 275–334, 337–376, and 379–411; these read GHRA…RSLK, GHTDSVQDVAFDAQGKLLASCSADLSIKLWDFQQTYECVK, GHDHNVSSVAFVPAGDYVLSASRDRTVKMWEVATGYCVKT, GHREWVRMVRVHIEGSIFATCSNDHTIRVWLTNSRDCKVE, DHEH…CLFT, GHDNWVRGLAFHPAGKYLVSASDDKTIRVWDLRNKRCMKT, and AHQHFCTSIDFHKAHPYVISGSVDQTVKVWECR.

Belongs to the WD repeat LIS1/nudF family.

Its subcellular location is the cytoplasm. The protein resides in the cytoskeleton. It localises to the microtubule organizing center. The protein localises to the centrosome. Positively regulates the activity of the minus-end directed microtubule motor protein dynein. May enhance dynein-mediated microtubule sliding by targeting dynein to the microtubule plus end. Required for several dynein- and microtubule-dependent processes. This is Lissencephaly-1 homolog from Drosophila ananassae (Fruit fly).